A 299-amino-acid polypeptide reads, in one-letter code: Protein N-terminal and lysine N-methyltransferase EFM7 (299 aa).

Residues tryptophan 74, 100–102, aspartate 122, tryptophan 155, and serine 178 each bind S-adenosyl-L-methionine; that span reads GAG.

This sequence belongs to the class I-like SAM-binding methyltransferase superfamily. EFM7 family.

Its subcellular location is the cytoplasm. S-adenosyl-L-methionine-dependent protein methyltransferase that trimethylates the N-terminal glycine 'Gly-2' of elongation factor 1-alpha, before also catalyzing the mono- and dimethylation of 'Lys-3'. The chain is Protein N-terminal and lysine N-methyltransferase EFM7 from Cryptococcus neoformans var. neoformans serotype D (strain B-3501A) (Filobasidiella neoformans).